The sequence spans 142 residues: Large ribosomal subunit protein uL16 (142 aa).

Belongs to the universal ribosomal protein uL16 family. Part of the 50S ribosomal subunit.

In terms of biological role, binds 23S rRNA and is also seen to make contacts with the A and possibly P site tRNAs. In Thermotoga maritima (strain ATCC 43589 / DSM 3109 / JCM 10099 / NBRC 100826 / MSB8), this protein is Large ribosomal subunit protein uL16.